Reading from the N-terminus, the 494-residue chain is Catalase isozyme 2 (494 aa).

Residues 1–29 (MDPCKFRPSSSFDTKTTTTNAGQPVWNDN) are disordered. A compositionally biased stretch (polar residues) spans 8–22 (PSSSFDTKTTTTNAG). Active-site residues include His65 and Asn138. Tyr348 serves as a coordination point for heme.

It belongs to the catalase family. Homotetramer. The cofactor is heme.

Its subcellular location is the peroxisome. It localises to the glyoxysome. It carries out the reaction 2 H2O2 = O2 + 2 H2O. Functionally, occurs in almost all aerobically respiring organisms and serves to protect cells from the toxic effects of hydrogen peroxide. This Hordeum vulgare (Barley) protein is Catalase isozyme 2 (CAT2).